Reading from the N-terminus, the 185-residue chain is Elongation factor P (185 aa).

It belongs to the elongation factor P family.

The protein resides in the cytoplasm. It participates in protein biosynthesis; polypeptide chain elongation. Its function is as follows. Involved in peptide bond synthesis. Stimulates efficient translation and peptide-bond synthesis on native or reconstituted 70S ribosomes in vitro. Probably functions indirectly by altering the affinity of the ribosome for aminoacyl-tRNA, thus increasing their reactivity as acceptors for peptidyl transferase. This chain is Elongation factor P, found in Carboxydothermus hydrogenoformans (strain ATCC BAA-161 / DSM 6008 / Z-2901).